Reading from the N-terminus, the 191-residue chain is uncharacterized protein (191 aa).

This is an uncharacterized protein from Histophilus somni (Haemophilus somnus).